Here is a 483-residue protein sequence, read N- to C-terminus: Glutamate--tRNA ligase (483 aa).

Residues 14-24 carry the 'HIGH' region motif; the sequence is PSPTGDPHVGT. The 'KMSKS' region motif lies at 253–257; the sequence is KISKR. Residue Lys-256 coordinates ATP.

The protein belongs to the class-I aminoacyl-tRNA synthetase family. Glutamate--tRNA ligase type 1 subfamily. Monomer.

The protein localises to the cytoplasm. The catalysed reaction is tRNA(Glu) + L-glutamate + ATP = L-glutamyl-tRNA(Glu) + AMP + diphosphate. In terms of biological role, catalyzes the attachment of glutamate to tRNA(Glu) in a two-step reaction: glutamate is first activated by ATP to form Glu-AMP and then transferred to the acceptor end of tRNA(Glu). The sequence is that of Glutamate--tRNA ligase from Deinococcus radiodurans (strain ATCC 13939 / DSM 20539 / JCM 16871 / CCUG 27074 / LMG 4051 / NBRC 15346 / NCIMB 9279 / VKM B-1422 / R1).